The chain runs to 221 residues: Peroxiredoxin 2 (221 aa).

The Thioredoxin domain occupies 15–170 (PQIGAPAPDF…IIRIIDALQT (156 aa)). Catalysis depends on Cys-56, which acts as the Cysteine sulfenic acid (-SOH) intermediate. Residue Arg-133 participates in substrate binding. A disulfide bridge connects residues Cys-211 and Cys-217.

This sequence belongs to the peroxiredoxin family. Prx6 subfamily. As to quaternary structure, homodecamer. Pentamer of dimers that assemble into a ring structure.

It is found in the cytoplasm. The enzyme catalyses a hydroperoxide + [thioredoxin]-dithiol = an alcohol + [thioredoxin]-disulfide + H2O. Its function is as follows. Thiol-specific peroxidase that catalyzes the reduction of hydrogen peroxide and organic hydroperoxides to water and alcohols, respectively. Plays a role in cell protection against oxidative stress by detoxifying peroxides. The protein is Peroxiredoxin 2 of Caldanaerobacter subterraneus subsp. tengcongensis (strain DSM 15242 / JCM 11007 / NBRC 100824 / MB4) (Thermoanaerobacter tengcongensis).